A 760-amino-acid polypeptide reads, in one-letter code: Histone-lysine N-methyltransferase EZH2 (760 aa).

Disordered regions lie at residues 208–231 (KDDA…SKKF) and 356–444 (PERA…PENV). Residues 361–373 (TPSKRSTGRRRGR) show a composition bias toward basic residues. A compositionally biased stretch (polar residues) spans 375–388 (PNSNSRPSTPTVNS). A compositionally biased stretch (basic and acidic residues) spans 389 to 400 (ETKDTDSDREGG). One can recognise a CXC domain in the interval 517–619 (CRKIQLKKDG…SKNVSCKNCS (103 aa)). Residues 626 to 741 (KHLLLAPSDV…TGEELFFDYR (116 aa)) enclose the SET domain.

This sequence belongs to the class V-like SAM-binding methyltransferase superfamily. Histone-lysine methyltransferase family. EZ subfamily. In terms of assembly, component of the prc2/eed-ezh2 complex.

It is found in the nucleus. It catalyses the reaction L-lysyl(27)-[histone H3] + 3 S-adenosyl-L-methionine = N(6),N(6),N(6)-trimethyl-L-lysyl(27)-[histone H3] + 3 S-adenosyl-L-homocysteine + 3 H(+). Polycomb group (PcG) protein. Catalytic subunit of the prc2/eed-ezh2 complex, which methylates 'Lys-9' and 'Lys-27' of histone H3, leading to transcriptional repression of the affected target gene. May regulate the circadian clock via histone methylation at the promoter of the circadian genes. In Danio rerio (Zebrafish), this protein is Histone-lysine N-methyltransferase EZH2 (ezh2).